The sequence spans 109 residues: uncharacterized protein (109 aa).

3 helical membrane passes run 16–36 (HPHLGISFIGCLLAITLEIYF), 52–72 (LIVLLVINMVTIPVVMALIAL), and 87–107 (ILLCLLSCILTIAGLFIAYPV).

The protein resides in the cell membrane. This is an uncharacterized protein from Salmonella typhimurium (strain LT2 / SGSC1412 / ATCC 700720).